The sequence spans 219 residues: Large ribosomal subunit protein uL3 (219 aa).

The interval 136–156 (GASHGAHRNHRKPGSIGGCAT) is disordered.

This sequence belongs to the universal ribosomal protein uL3 family. Part of the 50S ribosomal subunit. Forms a cluster with proteins L14 and L19.

Its function is as follows. One of the primary rRNA binding proteins, it binds directly near the 3'-end of the 23S rRNA, where it nucleates assembly of the 50S subunit. The protein is Large ribosomal subunit protein uL3 of Kineococcus radiotolerans (strain ATCC BAA-149 / DSM 14245 / SRS30216).